Reading from the N-terminus, the 84-residue chain is Exodeoxyribonuclease 7 small subunit (84 aa).

This sequence belongs to the XseB family. Heterooligomer composed of large and small subunits.

The protein resides in the cytoplasm. The enzyme catalyses Exonucleolytic cleavage in either 5'- to 3'- or 3'- to 5'-direction to yield nucleoside 5'-phosphates.. Its function is as follows. Bidirectionally degrades single-stranded DNA into large acid-insoluble oligonucleotides, which are then degraded further into small acid-soluble oligonucleotides. The sequence is that of Exodeoxyribonuclease 7 small subunit from Haemophilus influenzae (strain 86-028NP).